A 232-amino-acid chain; its full sequence is Large ribosomal subunit protein uL1 (232 aa).

It belongs to the universal ribosomal protein uL1 family. As to quaternary structure, part of the 50S ribosomal subunit.

Functionally, binds directly to 23S rRNA. The L1 stalk is quite mobile in the ribosome, and is involved in E site tRNA release. Its function is as follows. Protein L1 is also a translational repressor protein, it controls the translation of the L11 operon by binding to its mRNA. The protein is Large ribosomal subunit protein uL1 of Syntrophus aciditrophicus (strain SB).